Here is a 364-residue protein sequence, read N- to C-terminus: tRNA 2-selenouridine synthase (364 aa).

Positions 14 to 137 (LIADTPIIDV…LRQTAIQATI (124 aa)) constitute a Rhodanese domain. The S-selanylcysteine intermediate role is filled by Cys97.

It belongs to the SelU family. In terms of assembly, monomer.

The enzyme catalyses 5-methylaminomethyl-2-thiouridine(34) in tRNA + selenophosphate + (2E)-geranyl diphosphate + H2O + H(+) = 5-methylaminomethyl-2-selenouridine(34) in tRNA + (2E)-thiogeraniol + phosphate + diphosphate. It catalyses the reaction 5-methylaminomethyl-2-thiouridine(34) in tRNA + (2E)-geranyl diphosphate = 5-methylaminomethyl-S-(2E)-geranyl-thiouridine(34) in tRNA + diphosphate. It carries out the reaction 5-methylaminomethyl-S-(2E)-geranyl-thiouridine(34) in tRNA + selenophosphate + H(+) = 5-methylaminomethyl-2-(Se-phospho)selenouridine(34) in tRNA + (2E)-thiogeraniol. The catalysed reaction is 5-methylaminomethyl-2-(Se-phospho)selenouridine(34) in tRNA + H2O = 5-methylaminomethyl-2-selenouridine(34) in tRNA + phosphate. Functionally, involved in the post-transcriptional modification of the uridine at the wobble position (U34) of tRNA(Lys), tRNA(Glu) and tRNA(Gln). Catalyzes the conversion of 2-thiouridine (S2U-RNA) to 2-selenouridine (Se2U-RNA). Acts in a two-step process involving geranylation of 2-thiouridine (S2U) to S-geranyl-2-thiouridine (geS2U) and subsequent selenation of the latter derivative to 2-selenouridine (Se2U) in the tRNA chain. This chain is tRNA 2-selenouridine synthase, found in Escherichia coli O157:H7.